We begin with the raw amino-acid sequence, 197 residues long: Peptidyl-tRNA hydrolase (197 aa).

Tyrosine 18 contributes to the tRNA binding site. Histidine 23 functions as the Proton acceptor in the catalytic mechanism. The tRNA site is built by phenylalanine 69, asparagine 71, and asparagine 117.

This sequence belongs to the PTH family. In terms of assembly, monomer.

Its subcellular location is the cytoplasm. It carries out the reaction an N-acyl-L-alpha-aminoacyl-tRNA + H2O = an N-acyl-L-amino acid + a tRNA + H(+). Functionally, hydrolyzes ribosome-free peptidyl-tRNAs (with 1 or more amino acids incorporated), which drop off the ribosome during protein synthesis, or as a result of ribosome stalling. Its function is as follows. Catalyzes the release of premature peptidyl moieties from peptidyl-tRNA molecules trapped in stalled 50S ribosomal subunits, and thus maintains levels of free tRNAs and 50S ribosomes. In Tolumonas auensis (strain DSM 9187 / NBRC 110442 / TA 4), this protein is Peptidyl-tRNA hydrolase.